Here is a 173-residue protein sequence, read N- to C-terminus: Crossover junction endodeoxyribonuclease RuvC (173 aa).

Active-site residues include aspartate 8, glutamate 67, and aspartate 139. Mg(2+) contacts are provided by aspartate 8, glutamate 67, and aspartate 139.

This sequence belongs to the RuvC family. Homodimer which binds Holliday junction (HJ) DNA. The HJ becomes 2-fold symmetrical on binding to RuvC with unstacked arms; it has a different conformation from HJ DNA in complex with RuvA. In the full resolvosome a probable DNA-RuvA(4)-RuvB(12)-RuvC(2) complex forms which resolves the HJ. It depends on Mg(2+) as a cofactor.

The protein localises to the cytoplasm. The enzyme catalyses Endonucleolytic cleavage at a junction such as a reciprocal single-stranded crossover between two homologous DNA duplexes (Holliday junction).. Functionally, the RuvA-RuvB-RuvC complex processes Holliday junction (HJ) DNA during genetic recombination and DNA repair. Endonuclease that resolves HJ intermediates. Cleaves cruciform DNA by making single-stranded nicks across the HJ at symmetrical positions within the homologous arms, yielding a 5'-phosphate and a 3'-hydroxyl group; requires a central core of homology in the junction. The consensus cleavage sequence is 5'-(A/T)TT(C/G)-3'. Cleavage occurs on the 3'-side of the TT dinucleotide at the point of strand exchange. HJ branch migration catalyzed by RuvA-RuvB allows RuvC to scan DNA until it finds its consensus sequence, where it cleaves and resolves the cruciform DNA. The sequence is that of Crossover junction endodeoxyribonuclease RuvC from Shewanella pealeana (strain ATCC 700345 / ANG-SQ1).